The sequence spans 139 residues: uncharacterized protein (139 aa).

The 62-residue stretch at 1–62 folds into the HTH asnC-type domain; that stretch reads MDDTDLQILS…NICYEKLNKH (62 aa). Positions 20-39 form a DNA-binding region, H-T-H motif; sequence MVELGKLVGLSSPSAAERVR.

This is an uncharacterized protein from Bacillus subtilis (strain 168).